Here is a 194-residue protein sequence, read N- to C-terminus: uncharacterized protein (194 aa).

Residues 2–62 (QGPRERMVVS…CEAVDYAGEH (61 aa)) enclose the HTH tetR-type domain. Residues 25–44 (AISDVLQHSGAPRGSAYHYF) constitute a DNA-binding region (H-T-H motif).

This is an uncharacterized protein from Mycobacterium tuberculosis (strain CDC 1551 / Oshkosh).